A 171-amino-acid chain; its full sequence is Ribosome maturation factor RimM (171 aa).

Residues 97-169 (DGEFYYHEII…RVDVDIMEGL (73 aa)) enclose the PRC barrel domain.

The protein belongs to the RimM family. As to quaternary structure, binds ribosomal protein uS19.

The protein resides in the cytoplasm. Functionally, an accessory protein needed during the final step in the assembly of 30S ribosomal subunit, possibly for assembly of the head region. Essential for efficient processing of 16S rRNA. May be needed both before and after RbfA during the maturation of 16S rRNA. It has affinity for free ribosomal 30S subunits but not for 70S ribosomes. This is Ribosome maturation factor RimM from Lactococcus lactis subsp. cremoris (strain MG1363).